We begin with the raw amino-acid sequence, 298 residues long: GTPase Era (298 aa).

The 168-residue stretch at Lys3–Glu170 folds into the Era-type G domain. The G1 stretch occupies residues Gly11–Ser18. Gly11–Ser18 provides a ligand contact to GTP. The tract at residues Gln37 to Asn41 is G2. The segment at Asp58 to Gly61 is G3. GTP-binding positions include Asp58 to Ile62 and Asn120 to Asp123. Positions Asn120–Asp123 are G4. The interval Ile149–Ala151 is G5. One can recognise a KH type-2 domain in the interval Thr201–Lys279.

Belongs to the TRAFAC class TrmE-Era-EngA-EngB-Septin-like GTPase superfamily. Era GTPase family. Monomer.

It localises to the cytoplasm. Its subcellular location is the cell membrane. Its function is as follows. An essential GTPase that binds both GDP and GTP, with rapid nucleotide exchange. Plays a role in 16S rRNA processing and 30S ribosomal subunit biogenesis and possibly also in cell cycle regulation and energy metabolism. This chain is GTPase Era, found in Streptococcus pyogenes serotype M3 (strain ATCC BAA-595 / MGAS315).